The chain runs to 130 residues: Fluoride-specific ion channel FluC (130 aa).

4 consecutive transmembrane segments (helical) span residues 3 to 23 (FVFL…YFVG), 39 to 59 (GTFS…HLAV), 67 to 87 (FGIF…SYGL), and 102 to 122 (ISYV…GWFL). Gly-77 and Thr-80 together coordinate Na(+).

This sequence belongs to the fluoride channel Fluc/FEX (TC 1.A.43) family.

It localises to the cell inner membrane. The catalysed reaction is fluoride(in) = fluoride(out). Na(+) is not transported, but it plays an essential structural role and its presence is essential for fluoride channel function. In terms of biological role, fluoride-specific ion channel. Important for reducing fluoride concentration in the cell, thus reducing its toxicity. The protein is Fluoride-specific ion channel FluC of Helicobacter pylori (strain P12).